The following is a 161-amino-acid chain: MSQLTHINAAGEAHMVDVSTKQESVREARAQAFVVMLPQTLQMIIDGSHHKGDVFATARIAGIQAAKRTWELIPLCHPLLLSKVEVTLVAEPAHHRVRIESLCRLSGKTGVEMEALTAASVAALTIYDMCKAVQKDIVIEQCRLLSKSGGKSGDFQAVAND.

Substrate is bound by residues 75–77 (LCH) and 113–114 (ME). D128 is a catalytic residue.

This sequence belongs to the MoaC family. Homohexamer; trimer of dimers.

The enzyme catalyses (8S)-3',8-cyclo-7,8-dihydroguanosine 5'-triphosphate = cyclic pyranopterin phosphate + diphosphate. It functions in the pathway cofactor biosynthesis; molybdopterin biosynthesis. Catalyzes the conversion of (8S)-3',8-cyclo-7,8-dihydroguanosine 5'-triphosphate to cyclic pyranopterin monophosphate (cPMP). The protein is Cyclic pyranopterin monophosphate synthase of Erwinia tasmaniensis (strain DSM 17950 / CFBP 7177 / CIP 109463 / NCPPB 4357 / Et1/99).